A 270-amino-acid chain; its full sequence is 4-hydroxy-tetrahydrodipicolinate reductase (270 aa).

NAD(+) contacts are provided by residues 8-13, aspartate 34, 102-104, and 128-131; these read GALGRM, GTT, and SQNY. The active-site Proton donor/acceptor is the histidine 160. Histidine 161 serves as a coordination point for (S)-2,3,4,5-tetrahydrodipicolinate. The active-site Proton donor is lysine 164. 170–171 provides a ligand contact to (S)-2,3,4,5-tetrahydrodipicolinate; that stretch reads GT.

This sequence belongs to the DapB family.

Its subcellular location is the cytoplasm. The catalysed reaction is (S)-2,3,4,5-tetrahydrodipicolinate + NAD(+) + H2O = (2S,4S)-4-hydroxy-2,3,4,5-tetrahydrodipicolinate + NADH + H(+). The enzyme catalyses (S)-2,3,4,5-tetrahydrodipicolinate + NADP(+) + H2O = (2S,4S)-4-hydroxy-2,3,4,5-tetrahydrodipicolinate + NADPH + H(+). Its pathway is amino-acid biosynthesis; L-lysine biosynthesis via DAP pathway; (S)-tetrahydrodipicolinate from L-aspartate: step 4/4. Catalyzes the conversion of 4-hydroxy-tetrahydrodipicolinate (HTPA) to tetrahydrodipicolinate. The polypeptide is 4-hydroxy-tetrahydrodipicolinate reductase (Methanococcus maripaludis (strain C6 / ATCC BAA-1332)).